The following is a 49-amino-acid chain: Small integral membrane protein 27 (49 aa).

A helical transmembrane segment spans residues 11-31; the sequence is WTYSLLLLAIVLLSWGFVIYA.

Its subcellular location is the membrane. The chain is Small integral membrane protein 27 from Mus musculus (Mouse).